A 293-amino-acid polypeptide reads, in one-letter code: Putative DNA glycosylase At3g47830 (293 aa).

Basic residues predominate over residues methionine 1–leucine 10. The disordered stretch occupies residues methionine 1 to threonine 34. DNA contacts are provided by asparagine 108 and lysine 151. The Schiff-base intermediate with DNA role is filled by lysine 196. Positions 216 and 232 each coordinate DNA.

The protein belongs to the DNA glycosylase family.

The polypeptide is Putative DNA glycosylase At3g47830 (Arabidopsis thaliana (Mouse-ear cress)).